A 241-amino-acid polypeptide reads, in one-letter code: Phosphoadenosine 5'-phosphosulfate reductase (241 aa).

Residue Cys235 is the Nucleophile; cysteine thiosulfonate intermediate of the active site.

Belongs to the PAPS reductase family. CysH subfamily.

The protein localises to the cytoplasm. The catalysed reaction is [thioredoxin]-disulfide + sulfite + adenosine 3',5'-bisphosphate + 2 H(+) = [thioredoxin]-dithiol + 3'-phosphoadenylyl sulfate. Its pathway is sulfur metabolism; hydrogen sulfide biosynthesis; sulfite from sulfate: step 3/3. Catalyzes the formation of sulfite from phosphoadenosine 5'-phosphosulfate (PAPS) using thioredoxin as an electron donor. This Xanthomonas oryzae pv. oryzae (strain MAFF 311018) protein is Phosphoadenosine 5'-phosphosulfate reductase.